A 211-amino-acid polypeptide reads, in one-letter code: Histidine biosynthesis bifunctional protein HisIE (211 aa).

The segment at 1–117 (MSTQTNTKSD…CWLDGNAHPF (117 aa)) is phosphoribosyl-AMP cyclohydrolase. Positions 118–211 (LNNLAELIAS…LARHQKAQRK (94 aa)) are phosphoribosyl-ATP pyrophosphohydrolase.

The protein in the N-terminal section; belongs to the PRA-CH family. This sequence in the C-terminal section; belongs to the PRA-PH family.

It localises to the cytoplasm. The enzyme catalyses 1-(5-phospho-beta-D-ribosyl)-ATP + H2O = 1-(5-phospho-beta-D-ribosyl)-5'-AMP + diphosphate + H(+). It carries out the reaction 1-(5-phospho-beta-D-ribosyl)-5'-AMP + H2O = 1-(5-phospho-beta-D-ribosyl)-5-[(5-phospho-beta-D-ribosylamino)methylideneamino]imidazole-4-carboxamide. It participates in amino-acid biosynthesis; L-histidine biosynthesis; L-histidine from 5-phospho-alpha-D-ribose 1-diphosphate: step 2/9. It functions in the pathway amino-acid biosynthesis; L-histidine biosynthesis; L-histidine from 5-phospho-alpha-D-ribose 1-diphosphate: step 3/9. The protein is Histidine biosynthesis bifunctional protein HisIE of Shewanella oneidensis (strain ATCC 700550 / JCM 31522 / CIP 106686 / LMG 19005 / NCIMB 14063 / MR-1).